The sequence spans 461 residues: Fumarate hydratase class II (461 aa).

Residues S97–T99, H127–D130, S137–N139, and T185 each bind substrate. Residue H186 is the Proton donor/acceptor of the active site. S316 is an active-site residue. Substrate is bound by residues S317 and K322 to N324.

It belongs to the class-II fumarase/aspartase family. Fumarase subfamily. As to quaternary structure, homotetramer.

The protein localises to the cytoplasm. The catalysed reaction is (S)-malate = fumarate + H2O. The protein operates within carbohydrate metabolism; tricarboxylic acid cycle; (S)-malate from fumarate: step 1/1. Functionally, involved in the TCA cycle. Catalyzes the stereospecific interconversion of fumarate to L-malate. In Staphylococcus haemolyticus (strain JCSC1435), this protein is Fumarate hydratase class II.